A 305-amino-acid chain; its full sequence is Autophagy-related protein 27 (305 aa).

Residues 1 to 22 (MARYKGLSILSLFAVFSSLASA) form the signal peptide. Residues 23-242 (ELDCSNIKVD…EDGGSAPSGH (220 aa)) are Lumenal-facing. Residues 24–231 (LDCSNIKVDG…EWKTKYACEN (208 aa)) form the MRH domain. 2 disulfide bridges follow: cysteine 26–cysteine 66 and cysteine 74–cysteine 81. N-linked (GlcNAc...) asparagine glycosylation is present at asparagine 58. The N-linked (GlcNAc...) asparagine glycan is linked to asparagine 85. A disulfide bridge connects residues cysteine 156 and cysteine 229. Residues 163-202 (LEGLESPKPDGDKKKDGEKKDDDKKDNKDKEGKSKRDGEE) form a disordered region. A helical transmembrane segment spans residues 243–263 (WGFFTWVIVLYVVLVSLPLLS). Over 264 to 305 (ERVTNVRCHSQPVPVHFGLSDIRLVAQLQPVWSSRVGLASSQ) the chain is Cytoplasmic.

It belongs to the ATG27 family.

It is found in the cytoplasmic vesicle membrane. Its subcellular location is the golgi apparatus membrane. The protein localises to the mitochondrion membrane. The protein resides in the preautophagosomal structure membrane. Functionally, effector of phosphatidylinositol 3-phosphate kinase signaling. Regulates the cytoplasm to vacuole transport (Cvt) vesicle formation. Plays a role in ATG protein retrieval from the pre-autophagosomal structure (PAS). This Arthroderma benhamiae (strain ATCC MYA-4681 / CBS 112371) (Trichophyton mentagrophytes) protein is Autophagy-related protein 27.